Reading from the N-terminus, the 36-residue chain is Photosystem I reaction center subunit VIII (36 aa).

A helical transmembrane segment spans residues 8-28 (SIFVPLVGLVFPAIAMASLFL).

The protein belongs to the PsaI family.

Its subcellular location is the plastid. The protein resides in the chloroplast thylakoid membrane. May help in the organization of the PsaL subunit. This Solanum bulbocastanum (Wild potato) protein is Photosystem I reaction center subunit VIII.